We begin with the raw amino-acid sequence, 366 residues long: Protein sigma-NS (366 aa).

Positions 1 to 11 (MASSLRAAISK) are important for ssRNA-binding and formation of complexes.

The protein belongs to the orthoreovirus sigma-NS protein family. In terms of assembly, homooligomer; in presence of RNA. Interacts with protein mu-NS; this interaction allows the localization of sigma-NS to the viral factories. Interacts with host G3BP1 (via C-terminus); this interaction induces the relocalization of G3BP1 and other SG proteins to the viral factories periphery.

It localises to the host cytoplasm. Functionally, protein that binds to ssRNA and participates with protein mu-NS in forming the matrix of viral factories, which are large inclusions in the host cytoplasm where replication intermediates are assembled and viral RNA replication takes place. Plays a role in the inhibition of the integrated stress response (ISR) to escape from host cell translational shutoff. Participates in the disruption of stress granules (SG) through its association with host G3BP1 and mu-NS. The sequence is that of Protein sigma-NS (S3) from Mammalia (T1L).